The following is a 177-amino-acid chain: Protein SOB FIVE-LIKE 6 (177 aa).

The SOFL-A signature appears at 14 to 19; it reads SGWTMY. Disordered stretches follow at residues 37–60 and 78–104; these read ETKQEHDEDSSMVSDASSGPPYYC and KSKSKNKNKNKKKVHEEQGYSERFNSS. The SOFL-B motif lies at 47–56; sequence SMVSDASSGP. Positions 79–90 are enriched in basic residues; the sequence is SKSKNKNKNKKK.

Belongs to the SOFL plant protein family. As to expression, expressed in seedlings, flowers and siliques. Barely detectable in roots and leaves.

The protein resides in the cytoplasm. The protein localises to the nucleus. Its function is as follows. Involved in cytokinin-mediated development. The protein is Protein SOB FIVE-LIKE 6 of Arabidopsis thaliana (Mouse-ear cress).